A 406-amino-acid chain; its full sequence is uncharacterized protein (406 aa).

This is an uncharacterized protein from Escherichia coli (strain K12).